The following is a 248-amino-acid chain: Pulmonary surfactant-associated protein A2 (248 aa).

Residues 1–20 (MWLCPLALTLILMAASGAAC) form the signal peptide. A Collagen-like domain is found at 28-100 (GSPGIPGTPG…AGERGPPGLP (73 aa)). Residues proline 30, proline 33, proline 36, proline 42, proline 54, proline 57, proline 63, proline 67, and proline 70 each carry the 4-hydroxyproline modification. The tract at residues 33–101 (PGTPGSHGLP…GERGPPGLPA (69 aa)) is disordered. Residues 42-51 (PGRDGRDGVK) show a composition bias toward basic and acidic residues. Pro residues predominate over residues 54–70 (PGPPGPMGPPGETPCPP). Residues 71-82 (GNNGLPGAPGVP) are compositionally biased toward low complexity. Over residues 84–93 (ERGEKGEAGE) the composition is skewed to basic and acidic residues. Residues 132–248 (MTVGEKVFSS…LYSRLTICEF (117 aa)) form the C-type lectin domain. 2 cysteine pairs are disulfide-bonded: cysteine 155–cysteine 246 and cysteine 224–cysteine 238. An N-linked (GlcNAc...) asparagine glycan is attached at asparagine 207.

This sequence belongs to the SFTPA family. In terms of assembly, oligomeric complex of 6 set of homotrimers. Post-translationally, N-acetylated.

It is found in the secreted. It localises to the extracellular space. The protein localises to the extracellular matrix. Its subcellular location is the surface film. Functionally, in presence of calcium ions, it binds to surfactant phospholipids and contributes to lower the surface tension at the air-liquid interface in the alveoli of the mammalian lung and is essential for normal respiration. The chain is Pulmonary surfactant-associated protein A2 (SFTPA2) from Homo sapiens (Human).